A 571-amino-acid chain; its full sequence is 2-succinyl-5-enolpyruvyl-6-hydroxy-3-cyclohexene-1-carboxylate synthase (571 aa).

It belongs to the TPP enzyme family. MenD subfamily. In terms of assembly, homodimer. Requires Mg(2+) as cofactor. It depends on Mn(2+) as a cofactor. Thiamine diphosphate serves as cofactor.

The catalysed reaction is isochorismate + 2-oxoglutarate + H(+) = 5-enolpyruvoyl-6-hydroxy-2-succinyl-cyclohex-3-ene-1-carboxylate + CO2. Its pathway is quinol/quinone metabolism; 1,4-dihydroxy-2-naphthoate biosynthesis; 1,4-dihydroxy-2-naphthoate from chorismate: step 2/7. The protein operates within quinol/quinone metabolism; menaquinone biosynthesis. Its function is as follows. Catalyzes the thiamine diphosphate-dependent decarboxylation of 2-oxoglutarate and the subsequent addition of the resulting succinic semialdehyde-thiamine pyrophosphate anion to isochorismate to yield 2-succinyl-5-enolpyruvyl-6-hydroxy-3-cyclohexene-1-carboxylate (SEPHCHC). This Vibrio parahaemolyticus serotype O3:K6 (strain RIMD 2210633) protein is 2-succinyl-5-enolpyruvyl-6-hydroxy-3-cyclohexene-1-carboxylate synthase.